The chain runs to 806 residues: Leucine--tRNA ligase (806 aa).

The short motif at 38–48 is the 'HIGH' region element; that stretch reads PYPSGEIHMGH. The 'KMSKS' region motif lies at 572-576; it reads KMSKS. K575 lines the ATP pocket.

Belongs to the class-I aminoacyl-tRNA synthetase family.

The protein localises to the cytoplasm. It catalyses the reaction tRNA(Leu) + L-leucine + ATP = L-leucyl-tRNA(Leu) + AMP + diphosphate. This Helicobacter pylori (strain J99 / ATCC 700824) (Campylobacter pylori J99) protein is Leucine--tRNA ligase.